Here is a 309-residue protein sequence, read N- to C-terminus: Formimidoylglutamase (309 aa).

Positions 128, 153, 155, 157, 240, and 242 each coordinate Mn(2+).

Belongs to the arginase family. It depends on Mn(2+) as a cofactor.

It catalyses the reaction N-formimidoyl-L-glutamate + H2O = formamide + L-glutamate. Its pathway is amino-acid degradation; L-histidine degradation into L-glutamate; L-glutamate from N-formimidoyl-L-glutamate (hydrolase route): step 1/1. In terms of biological role, catalyzes the conversion of N-formimidoyl-L-glutamate to L-glutamate and formamide. This is Formimidoylglutamase from Staphylococcus carnosus (strain TM300).